Here is a 794-residue protein sequence, read N- to C-terminus: MDAFKGYIASQKIQHSHAPSNDSSINSGHEMHPYGVNRNINAAPADDYYTPYLGLRARLSQTWINRWTVLLLLIIVRLLISLAGIKGDVASAKTEALSACSSVENVGSAMASMPHYLSQGVNSMAAAGITKAVNGMMQMLYMSLTGVEEIVLFVIHMMTSTYMCLITLAITGSLQVAIQMIEDVGAFMNKSIDTITGDMSSGLKSFEDDLNGFLSKINIGGIFGSSTSPPTIDLSSEINKLNSIQIDPTTMDADLAKLNASLPTFEQVQNFTDNIIKLPFEEVKKLVNESMIAYKFDDSVFPVPQKKSLTFCSDNTAIQDFFVGLVKTLDTAKKIILIVLVIAAILACIPMAFREIWGWRVMQIQAALLKSRSYTNEMDILYQAHRPYTSQFGLKLSRRFKGQKNQILARWFIAYATSIPALFVLALGLAGLFTCLCQFIVLKTLEKEIPALTAEVGDFAEHVVKALNNASESWALGANSVINNTNTEINDNVFGWVNTTTGAINETLNVFTDEMTKALNVTFGGTILYKPIMGVFECLVGLKIAGIEKGLTWVSDNAHVEFPEFQPDVFSLGAAASLSNTTADDNFLANPATSTTDEITNAVVKVGKKLEAVIRQEALISTALVAIYFVIVLIGLVHVIIGMCGRDKSRGEGGSAPTPLYRNTDVEAPNQHLPEISREKFGTSGNDGWHQEHMRAGGDPITRMPFGGGDGAADDLPYNGAPAPTYEASIAPTERLGVVPAGRVNTNRGPWVRDEKSRELWEADDMQRRATSSYGHLEGGDEKSSGWGVPPRRI.

The Extracellular portion of the chain corresponds to 1–66 (MDAFKGYIAS…ARLSQTWINR (66 aa)). The segment at 9 to 30 (ASQKIQHSHAPSNDSSINSGHE) is disordered. Polar residues predominate over residues 11–27 (QKIQHSHAPSNDSSINS). Asn21 is a glycosylation site (N-linked (GlcNAc...) asparagine). The helical transmembrane segment at 67–87 (WTVLLLLIIVRLLISLAGIKG) threads the bilayer. The Cytoplasmic portion of the chain corresponds to 88–149 (DVASAKTEAL…LYMSLTGVEE (62 aa)). Residues 150–170 (IVLFVIHMMTSTYMCLITLAI) traverse the membrane as a helical segment. Topologically, residues 171-332 (TGSLQVAIQM…VGLVKTLDTA (162 aa)) are extracellular. N-linked (GlcNAc...) asparagine glycans are attached at residues Asn189, Asn259, Asn270, and Asn288. The helical transmembrane segment at 333–353 (KKIILIVLVIAAILACIPMAF) threads the bilayer. At 354-421 (REIWGWRVMQ…FIAYATSIPA (68 aa)) the chain is on the cytoplasmic side. Residues 422–442 (LFVLALGLAGLFTCLCQFIVL) traverse the membrane as a helical segment. Over 443–622 (KTLEKEIPAL…VIRQEALIST (180 aa)) the chain is Extracellular. Asn469, Asn483, Asn498, Asn505, Asn520, and Asn580 each carry an N-linked (GlcNAc...) asparagine glycan. Residues 623–643 (ALVAIYFVIVLIGLVHVIIGM) form a helical membrane-spanning segment. Residues 644–794 (CGRDKSRGEG…SGWGVPPRRI (151 aa)) are Cytoplasmic-facing. Residues 756–768 (KSRELWEADDMQR) are compositionally biased toward basic and acidic residues. Positions 756-794 (KSRELWEADDMQRRATSSYGHLEGGDEKSSGWGVPPRRI) are disordered.

This sequence belongs to the PRM1 family.

It localises to the cell membrane. Its function is as follows. Involved in cell fusion during mating by stabilizing the plasma membrane fusion event. In Botryotinia fuckeliana (strain B05.10) (Noble rot fungus), this protein is Plasma membrane fusion protein prm1 (prm1).